We begin with the raw amino-acid sequence, 131 residues long: Period circadian protein (131 aa).

The segment at 29–109 is disordered; the sequence is VTAPVELDPP…NSAGGASGGV (81 aa). A compositionally biased stretch (low complexity) spans 71–93; sequence SGNFTTGSNVRMSSVTNTSNAGT. Positions 94-109 are enriched in gly residues; that stretch reads GTSGGGNSAGGASGGV.

In terms of assembly, forms a heterodimer with timeless (TIM); the complex then translocates into the nucleus. In terms of processing, phosphorylated with a circadian rhythmicity, probably by the double-time protein (dbt). Phosphorylation could be implicated in the stability of per monomer and in the formation of heterodimer per-tim.

Its subcellular location is the nucleus. The protein resides in the cytoplasm. It localises to the perinuclear region. Its function is as follows. Essential for biological clock functions. Determines the period length of circadian and ultradian rhythms; an increase in PER dosage leads to shortened circadian rhythms and a decrease leads to lengthened circadian rhythms. Essential for the circadian rhythmicity of locomotor activity, eclosion behavior, and for the rhythmic component of the male courtship song that originates in the thoracic nervous system. The biological cycle depends on the rhythmic formation and nuclear localization of the TIM-PER complex. Light induces the degradation of TIM, which promotes elimination of PER. Nuclear activity of the heterodimer coordinatively regulates PER and TIM transcription through a negative feedback loop. Behaves as a negative element in circadian transcriptional loop. Does not appear to bind DNA, suggesting indirect transcriptional inhibition. The sequence is that of Period circadian protein (per) from Zaprionus tuberculatus (Vinegar fly).